Reading from the N-terminus, the 692-residue chain is Enzymatic polyprotein (692 aa).

Residue Asp36 is the For protease activity of the active site. The Reverse transcriptase domain occupies 227–411 (LKKGLIRESQ…QEIEYLGLKI (185 aa)).

It belongs to the caulimoviridae enzymatic polyprotein family.

It carries out the reaction DNA(n) + a 2'-deoxyribonucleoside 5'-triphosphate = DNA(n+1) + diphosphate. Functionally, encodes for at least two polypeptides: protease (PR) and reverse transcriptase (RT). The protease processes the polyprotein in cis. Reverse transcriptase is multifunctional enzyme that converts the viral RNA genome into dsDNA in viral cytoplasmic capsids. This enzyme displays a DNA polymerase activity that can copy either DNA or RNA templates, and a ribonuclease H (RNase H) activity that cleaves the RNA strand of RNA-DNA heteroduplexes in a partially processive 3'- to 5'-endonucleasic mode. Neo-synthesized pregenomic RNA (pgRNA) are encapsidated, and reverse-transcribed inside the nucleocapsid. Partial (+)DNA is synthesized from the (-)DNA template and generates the relaxed circular DNA (RC-DNA) genome. After budding and infection, the RC-DNA migrates in the nucleus, and is converted into a plasmid-like covalently closed circular DNA (cccDNA). The sequence is that of Enzymatic polyprotein from Soybean chlorotic mottle virus.